The chain runs to 281 residues: NADPH-dependent 7-cyano-7-deazaguanine reductase (281 aa).

Substrate is bound at residue 87-89 (IES). 89–90 (SK) provides a ligand contact to NADPH. C188 serves as the catalytic Thioimide intermediate. Residue D195 is the Proton donor of the active site. Substrate is bound at residue 227–228 (HE). Residue 256-257 (RG) coordinates NADPH. The tract at residues 261 to 281 (INPYRSTEQDKPAHNHRMARQ) is disordered.

Belongs to the GTP cyclohydrolase I family. QueF type 2 subfamily. In terms of assembly, homodimer.

The protein resides in the cytoplasm. It carries out the reaction 7-aminomethyl-7-carbaguanine + 2 NADP(+) = 7-cyano-7-deazaguanine + 2 NADPH + 3 H(+). It participates in tRNA modification; tRNA-queuosine biosynthesis. Catalyzes the NADPH-dependent reduction of 7-cyano-7-deazaguanine (preQ0) to 7-aminomethyl-7-deazaguanine (preQ1). The protein is NADPH-dependent 7-cyano-7-deazaguanine reductase of Vibrio parahaemolyticus serotype O3:K6 (strain RIMD 2210633).